The chain runs to 165 residues: MRIDTSALCDIYSDQVDVVEPIFSSFGGASSFYGKITTVKCFESNGLIASVLEEEGQGRVLLIDGGGAVRRALIDAELAQLALDNGWEGIIVYGAVRQLDVLETLDIGIHALAPIPVGADDNEIGEVDTPVNFGGVTFFPEDYVYADLTGIILSPELLDLAELEE.

It belongs to the RraA family. As to quaternary structure, homotrimer. Binds to both RNA-binding sites in the C-terminal region of Rne and to RhlB.

Its subcellular location is the cytoplasm. Its function is as follows. Globally modulates RNA abundance by binding to RNase E (Rne) and regulating its endonucleolytic activity. Can modulate Rne action in a substrate-dependent manner by altering the composition of the degradosome. Modulates RNA-binding and helicase activities of the degradosome. The polypeptide is Regulator of ribonuclease activity A (Actinobacillus pleuropneumoniae serotype 5b (strain L20)).